The chain runs to 114 residues: U17-barytoxin-Tl1d (114 aa).

Positions 1–20 are cleaved as a signal peptide; that stretch reads MKTIIVFLSLLVLATKFGDA. Residues 21-74 constitute a propeptide that is removed on maturation; sequence NEGVNQEQMKEVIQNEFREDFLNEMAAMSLLQQLEAIESTLLEKEADRNSRQKR. Cystine bridges form between C75-C88, C82-C93, and C87-C108.

It belongs to the neurotoxin 14 (magi-1) family. 03 (ICK-30-40) subfamily. Expressed by the venom gland.

The protein localises to the secreted. Ion channel inhibitor. The sequence is that of U17-barytoxin-Tl1d from Trittame loki (Brush-footed trapdoor spider).